The following is a 67-amino-acid chain: Small ribosomal subunit protein bS21 (67 aa).

This sequence belongs to the bacterial ribosomal protein bS21 family.

The chain is Small ribosomal subunit protein bS21 from Acidiphilium cryptum (strain JF-5).